Reading from the N-terminus, the 456-residue chain is Bifunctional protein GlmU (456 aa).

Residues 1-229 (MLNNAMSVVI…LSEVEGVNNR (229 aa)) form a pyrophosphorylase region. UDP-N-acetyl-alpha-D-glucosamine contacts are provided by residues 11 to 14 (LAAG), Lys25, Gln76, 81 to 82 (GT), 103 to 105 (YGD), Gly140, Glu154, Asn169, and Asn227. Asp105 contacts Mg(2+). Asn227 provides a ligand contact to Mg(2+). The interval 230 to 250 (LQLSRLERVYQSEQAEKLLLA) is linker. Positions 251 to 456 (GVMLRDPARF…EGWRRPVKKK (206 aa)) are N-acetyltransferase. UDP-N-acetyl-alpha-D-glucosamine is bound by residues Arg333 and Lys351. The active-site Proton acceptor is the His363. 2 residues coordinate UDP-N-acetyl-alpha-D-glucosamine: Tyr366 and Asn377. Residues Ala380, 386 to 387 (NY), Ser405, Ala423, and Arg440 each bind acetyl-CoA.

In the N-terminal section; belongs to the N-acetylglucosamine-1-phosphate uridyltransferase family. This sequence in the C-terminal section; belongs to the transferase hexapeptide repeat family. In terms of assembly, homotrimer. Requires Mg(2+) as cofactor.

Its subcellular location is the cytoplasm. It catalyses the reaction alpha-D-glucosamine 1-phosphate + acetyl-CoA = N-acetyl-alpha-D-glucosamine 1-phosphate + CoA + H(+). The catalysed reaction is N-acetyl-alpha-D-glucosamine 1-phosphate + UTP + H(+) = UDP-N-acetyl-alpha-D-glucosamine + diphosphate. The protein operates within nucleotide-sugar biosynthesis; UDP-N-acetyl-alpha-D-glucosamine biosynthesis; N-acetyl-alpha-D-glucosamine 1-phosphate from alpha-D-glucosamine 6-phosphate (route II): step 2/2. Its pathway is nucleotide-sugar biosynthesis; UDP-N-acetyl-alpha-D-glucosamine biosynthesis; UDP-N-acetyl-alpha-D-glucosamine from N-acetyl-alpha-D-glucosamine 1-phosphate: step 1/1. It participates in bacterial outer membrane biogenesis; LPS lipid A biosynthesis. Its function is as follows. Catalyzes the last two sequential reactions in the de novo biosynthetic pathway for UDP-N-acetylglucosamine (UDP-GlcNAc). The C-terminal domain catalyzes the transfer of acetyl group from acetyl coenzyme A to glucosamine-1-phosphate (GlcN-1-P) to produce N-acetylglucosamine-1-phosphate (GlcNAc-1-P), which is converted into UDP-GlcNAc by the transfer of uridine 5-monophosphate (from uridine 5-triphosphate), a reaction catalyzed by the N-terminal domain. The chain is Bifunctional protein GlmU from Escherichia coli O81 (strain ED1a).